Reading from the N-terminus, the 788-residue chain is Endonuclease MutS2 (788 aa).

332 to 339 (GPNTGGKT) serves as a coordination point for ATP. Positions 713 to 788 (VDLRGMDAEE…GTGVTVVEIK (76 aa)) constitute a Smr domain.

It belongs to the DNA mismatch repair MutS family. MutS2 subfamily. As to quaternary structure, homodimer. Binds to stalled ribosomes, contacting rRNA.

In terms of biological role, endonuclease that is involved in the suppression of homologous recombination and thus may have a key role in the control of bacterial genetic diversity. Its function is as follows. Acts as a ribosome collision sensor, splitting the ribosome into its 2 subunits. Detects stalled/collided 70S ribosomes which it binds and splits by an ATP-hydrolysis driven conformational change. Acts upstream of the ribosome quality control system (RQC), a ribosome-associated complex that mediates the extraction of incompletely synthesized nascent chains from stalled ribosomes and their subsequent degradation. Probably generates substrates for RQC. This Clostridium botulinum (strain Loch Maree / Type A3) protein is Endonuclease MutS2.